A 207-amino-acid chain; its full sequence is MSERLLVLVRHGQSEWNLKNLFTGWKDPDLTELGAAEAKDAGRKLKAQGFVFDIAFTSTLIRAQHTLDLVLKELDQTGIPVRKDQALNERDYGDLSGLNKDEARKKWGDEQVLVWRRSYDVPPPGGESLKDTLARTLPYFVQEILPCVLRGECTLVAAHGNSLRALVMVLEKLSPEQILARELATGAPVIYRLNADATVASKLDLAA.

Residues Arg10 to Asn17, Thr23 to Gly24, Arg62, Glu89 to Tyr92, Lys100, Arg116 to Arg117, and Gly160 to Asn161 contribute to the substrate site. The Tele-phosphohistidine intermediate role is filled by His11. Catalysis depends on Glu89, which acts as the Proton donor/acceptor.

The protein belongs to the phosphoglycerate mutase family. BPG-dependent PGAM subfamily. As to quaternary structure, homodimer.

The catalysed reaction is (2R)-2-phosphoglycerate = (2R)-3-phosphoglycerate. The protein operates within carbohydrate degradation; glycolysis; pyruvate from D-glyceraldehyde 3-phosphate: step 3/5. Functionally, catalyzes the interconversion of 2-phosphoglycerate and 3-phosphoglycerate. In Nitrobacter winogradskyi (strain ATCC 25391 / DSM 10237 / CIP 104748 / NCIMB 11846 / Nb-255), this protein is 2,3-bisphosphoglycerate-dependent phosphoglycerate mutase.